The following is an 801-amino-acid chain: H(+)/Cl(-) exchange transporter 3 (801 aa).

The Cytoplasmic portion of the chain corresponds to 1 to 125 (MESEQLFHRG…WEMTKSLYDA (125 aa)). 3 consecutive short sequence motifs (di-leucine internalization motif; mediates targeting to late endosome and lysosome membranes) follow at residues 28–29 (LL), 46–47 (LL), and 71–75 (LLDLL). A helical membrane pass occupies residues 126 to 163 (WSGWLVVTLTGLASGALAGLIDIAADWMTDLKEGICLS). N177 carries an N-linked (GlcNAc...) asparagine glycan. Residues 209–232 (MNYIMYIFWALSFAFLAVSLVKVF) traverse the membrane as a helical segment. The Selectivity filter part_1 motif lies at 238-242 (GSGIP). S239 serves as a coordination point for chloride. The helical intramembrane region spans 241 to 248 (IPEIKTIL). 2 helical membrane passes run 258–276 (GKWTLMIKTVTLVLAVASG) and 282–301 (EGPLVHVACCCGNIFSYLFP). A Selectivity filter part_2 motif is present at residues 280 to 284 (GKEGP). 2 consecutive intramembrane regions (helical) follow at residues 313-325 (VLSAASAAGVSVA) and 329-337 (PIGGVLFSL). 3 consecutive transmembrane segments (helical) span residues 349 to 367 (LWRSFFAALVAAFVLRSIN), 391 to 416 (FPFILLGVFGGLWGAFFIRANIAWCR), and 423 to 443 (FGKYPVLEVIIVAAITAVIAF). 2 N-linked (GlcNAc...) asparagine glycosylation sites follow: N451 and N479. The chain crosses the membrane as a helical span at residues 500–520 (IWQLCLALIFKIIMTVFTFGI). Residues 525–529 (GLFIP) carry the Selectivity filter part_3 motif. Chloride is bound at residue F527. 2 intramembrane regions (helical) span residues 555–569 (GLYAMVGAAACLGGV) and 573–584 (TVSLVVIVFELT). An intramembrane region (note=Loop between two helices) is located at residues 585-588 (GGLE). The chain crosses the membrane as a helical span at residues 589–607 (YIVPLMAAVMTSKWVGDAF). The Cytoplasmic portion of the chain corresponds to 608 to 801 (GREGIYEAHI…NQDPASIMFN (194 aa)). Y613 serves as a coordination point for chloride. CBS domains lie at 641 to 705 (MRPR…ARKK) and 738 to 795 (LDMS…NQDP). ATP contacts are provided by residues 672 to 674 (YNG) and 779 to 782 (TKKD).

This sequence belongs to the chloride channel (TC 2.A.49) family. ClC-3/CLCN3 subfamily. Monomer and homodimer. Forms heterodimers with CLCN4. Post-translationally, N-glycosylated.

It localises to the early endosome membrane. Its subcellular location is the late endosome membrane. The protein localises to the lysosome membrane. The protein resides in the cell membrane. In terms of biological role, strongly outwardly rectifying, electrogenic H(+)/Cl(-)exchanger which mediates the exchange of chloride ions against protons. The CLC channel family contains both chloride channels and proton-coupled anion transporters that exchange chloride or another anion for protons. The presence of conserved gating glutamate residues is typical for family members that function as antiporters. The polypeptide is H(+)/Cl(-) exchange transporter 3 (CLCN3) (Pongo abelii (Sumatran orangutan)).